Consider the following 337-residue polypeptide: MVSMHIPVLYDAALAALNLRPDGRYIDGTLGWAGHSSGILEGSGPTGRLLAIDQDPMALAAARERLAPYGERATIVHGNYRQMASLAAQHGWQQVDGILLDIGVSSPQLDLPERGFSFQYDAPLDMRMNPTRGESAADLIAQLDETSLANLIYEYGEERLSRRIARRIVEQRSKSPITSTAQLASLVKSAVGGQAGKTHPATRTFQALRIAVNDELGALREGLAAATNLLAPGGRLAVITFHSLEDRIVKEWMRDQASECLIPAKLEILACPHNCAANTGPRSCIYPVGRDCDYVPTLEVLSRKPIEATPEELKANPRARSAKLRVAERRLTKTLAS.

S-adenosyl-L-methionine contacts are provided by residues 33–35 (AGH), Asp-53, Asp-101, and Gln-108.

This sequence belongs to the methyltransferase superfamily. RsmH family.

It localises to the cytoplasm. It catalyses the reaction cytidine(1402) in 16S rRNA + S-adenosyl-L-methionine = N(4)-methylcytidine(1402) in 16S rRNA + S-adenosyl-L-homocysteine + H(+). Specifically methylates the N4 position of cytidine in position 1402 (C1402) of 16S rRNA. This chain is Ribosomal RNA small subunit methyltransferase H, found in Herpetosiphon aurantiacus (strain ATCC 23779 / DSM 785 / 114-95).